We begin with the raw amino-acid sequence, 976 residues long: 3-O-beta-L-arabinopyranosyl-alpha-L-arabinofuranosidase (976 aa).

Residues 1–28 (MSHRNKALVAIVAGTALLISSGAAIGQA) form the signal peptide. The Proton donor role is filled by glutamate 190. Glutamate 315 (nucleophile) is an active-site residue. Positions 519–654 (LLVEEVENTV…DNTLDKFLLY (136 aa)) constitute a CBM6 domain.

Belongs to the glycosyl hydrolase 39 family.

It localises to the secreted. The enzyme catalyses Hydrolysis of beta-L-Arap-(1-&gt;3)-L-Araf disaccharides from non-reducing terminals in branches of type II arabinogalactan attached to proteins.. Hydrolase involved in the degradation of the gum arabic arabinogalactan protein (AGP) and larch AGP. Catalyzes the release of 3-O-beta-L-arabinopyranosyl-L-arabinose (beta-L-Arap-(1-&gt;3)-L-Ara) from gum arabic AGP and larch AGP. Also cleaves a small amount of beta-L-Arap-(1-&gt;3)-L-Ara from sugar beet arabinan, but wheat AGP cannot be used as a substrate. Can also release 3-O-alpha-D-galactopyranosyl-L-arabinose (alpha-D-Galp-(1-&gt;3)-L-Ara) from gum arabic AGP, with low efficiency. This Bifidobacterium pseudocatenulatum protein is 3-O-beta-L-arabinopyranosyl-alpha-L-arabinofuranosidase.